A 78-amino-acid chain; its full sequence is Large ribosomal subunit protein bL28 (78 aa).

Belongs to the bacterial ribosomal protein bL28 family.

This is Large ribosomal subunit protein bL28 from Klebsiella pneumoniae (strain 342).